The primary structure comprises 141 residues: MAKKVIGFIKLQIPAGGANPAPPVGPALGQKGVNIMEFCKQFNAKTQADAGTIIPVVITVYSDKSFTFITKTPPAPVLLLKEANQKKGSGEPNRNKVGTVTGEQVRKIAELKMPDLNAVDLAGAEAMIRGTARSMGIVVQD.

The protein belongs to the universal ribosomal protein uL11 family. Part of the ribosomal stalk of the 50S ribosomal subunit. Interacts with L10 and the large rRNA to form the base of the stalk. L10 forms an elongated spine to which L12 dimers bind in a sequential fashion forming a multimeric L10(L12)X complex. One or more lysine residues are methylated.

Functionally, forms part of the ribosomal stalk which helps the ribosome interact with GTP-bound translation factors. This is Large ribosomal subunit protein uL11 from Chlorobium chlorochromatii (strain CaD3).